The following is a 40-amino-acid chain: Photosystem II reaction center protein T (40 aa).

A helical transmembrane segment spans residues 3-23 (ALVYTFLLVGTLGIIFFAIFF).

The protein belongs to the PsbT family. In terms of assembly, PSII is composed of 1 copy each of membrane proteins PsbA, PsbB, PsbC, PsbD, PsbE, PsbF, PsbH, PsbI, PsbJ, PsbK, PsbL, PsbM, PsbT, PsbY, PsbZ, Psb30/Ycf12, at least 3 peripheral proteins of the oxygen-evolving complex and a large number of cofactors. It forms dimeric complexes.

The protein resides in the plastid. It localises to the chloroplast thylakoid membrane. Found at the monomer-monomer interface of the photosystem II (PS II) dimer, plays a role in assembly and dimerization of PSII. PSII is a light-driven water plastoquinone oxidoreductase, using light energy to abstract electrons from H(2)O, generating a proton gradient subsequently used for ATP formation. The polypeptide is Photosystem II reaction center protein T (Anthoceros angustus (Hornwort)).